Consider the following 84-residue polypeptide: Envelope glycoprotein N (84 aa).

A signal peptide spans 1-26 (MSCKKGARQRLYVSLWLFYILVFAAA). Over 27-45 (TEMDFYSSECHSHTYEIVL) the chain is Virion surface. The helical transmembrane segment at 46–66 (NSFSSIWLLINLFLLLCSFAI) threads the bilayer. Residues 67 to 84 (FLKYWCYKTFASETVKGY) are Intravirion-facing.

It belongs to the herpesviridae glycoprotein N family. In terms of assembly, interacts (via N-terminus) with gM (via N-terminus). The gM-gN heterodimer forms the gCII complex.

It is found in the virion membrane. The protein localises to the host membrane. Its subcellular location is the host Golgi apparatus. The protein resides in the host trans-Golgi network. Its function is as follows. Envelope glycoprotein necessary for proper maturation of gM and modulation of its membrane fusion activity. Also plays a critical role in virion morphogenesis. In Human herpesvirus 6B (strain Z29) (HHV-6 variant B), this protein is Envelope glycoprotein N.